Consider the following 688-residue polypeptide: Methionine--tRNA ligase (688 aa).

The 'HIGH' region signature appears at 15–25 (PYANGPIHLGH). Zn(2+)-binding residues include Cys-146, Cys-149, Cys-159, and Cys-162. The short motif at 332–336 (KMSKS) is the 'KMSKS' region element. Lys-335 provides a ligand contact to ATP. A disordered region spans residues 552–576 (AEAPKKADSKKATDTPVDTRPPLES). Residues 554–564 (APKKADSKKAT) are compositionally biased toward basic and acidic residues. The 102-residue stretch at 587-688 (DFAKIDLRIA…EGAQPGMRVK (102 aa)) folds into the tRNA-binding domain.

It belongs to the class-I aminoacyl-tRNA synthetase family. MetG type 1 subfamily. In terms of assembly, homodimer. The cofactor is Zn(2+).

It localises to the cytoplasm. It catalyses the reaction tRNA(Met) + L-methionine + ATP = L-methionyl-tRNA(Met) + AMP + diphosphate. Its function is as follows. Is required not only for elongation of protein synthesis but also for the initiation of all mRNA translation through initiator tRNA(fMet) aminoacylation. The sequence is that of Methionine--tRNA ligase from Shewanella woodyi (strain ATCC 51908 / MS32).